A 209-amino-acid polypeptide reads, in one-letter code: Large ribosomal subunit protein uL3 (209 aa).

It belongs to the universal ribosomal protein uL3 family. Part of the 50S ribosomal subunit. Forms a cluster with proteins L14 and L19.

One of the primary rRNA binding proteins, it binds directly near the 3'-end of the 23S rRNA, where it nucleates assembly of the 50S subunit. The chain is Large ribosomal subunit protein uL3 from Moorella thermoacetica (strain ATCC 39073 / JCM 9320).